We begin with the raw amino-acid sequence, 201 residues long: Large ribosomal subunit protein bL25 (201 aa).

The protein belongs to the bacterial ribosomal protein bL25 family. CTC subfamily. As to quaternary structure, part of the 50S ribosomal subunit; part of the 5S rRNA/L5/L18/L25 subcomplex. Contacts the 5S rRNA. Binds to the 5S rRNA independently of L5 and L18.

This is one of the proteins that binds to the 5S RNA in the ribosome where it forms part of the central protuberance. This is Large ribosomal subunit protein bL25 from Ectopseudomonas mendocina (strain ymp) (Pseudomonas mendocina).